A 602-amino-acid chain; its full sequence is Elongation factor 4 (602 aa).

One can recognise a tr-type G domain in the interval 7–189; it reads RNIRNFSIIA…AIVQRIPAPQ (183 aa). GTP-binding positions include 19-24 and 136-139; these read DHGKST and NKID.

It belongs to the TRAFAC class translation factor GTPase superfamily. Classic translation factor GTPase family. LepA subfamily.

It is found in the cell inner membrane. It carries out the reaction GTP + H2O = GDP + phosphate + H(+). Its function is as follows. Required for accurate and efficient protein synthesis under certain stress conditions. May act as a fidelity factor of the translation reaction, by catalyzing a one-codon backward translocation of tRNAs on improperly translocated ribosomes. Back-translocation proceeds from a post-translocation (POST) complex to a pre-translocation (PRE) complex, thus giving elongation factor G a second chance to translocate the tRNAs correctly. Binds to ribosomes in a GTP-dependent manner. This chain is Elongation factor 4, found in Xylella fastidiosa (strain M12).